A 183-amino-acid polypeptide reads, in one-letter code: Putative 3-methyladenine DNA glycosylase (183 aa).

Belongs to the DNA glycosylase MPG family.

In Rickettsia peacockii (strain Rustic), this protein is Putative 3-methyladenine DNA glycosylase.